We begin with the raw amino-acid sequence, 130 residues long: Small ribosomal subunit protein uS8 (130 aa).

It belongs to the universal ribosomal protein uS8 family. As to quaternary structure, part of the 30S ribosomal subunit. Contacts proteins S5 and S12.

One of the primary rRNA binding proteins, it binds directly to 16S rRNA central domain where it helps coordinate assembly of the platform of the 30S subunit. The sequence is that of Small ribosomal subunit protein uS8 from Moorella thermoacetica (strain ATCC 39073 / JCM 9320).